We begin with the raw amino-acid sequence, 662 residues long: ATP-dependent zinc metalloprotease YME1 homolog (662 aa).

Residue 206-213 coordinates ATP; sequence GPPGVGKT. Histidine 425 contributes to the Zn(2+) binding site. Residue glutamate 426 is part of the active site. Residues histidine 429 and aspartate 503 each contribute to the Zn(2+) site.

In the N-terminal section; belongs to the AAA ATPase family. It in the C-terminal section; belongs to the peptidase M41 family. Requires Zn(2+) as cofactor.

In terms of biological role, putative ATP-dependent protease. This Schistosoma mansoni (Blood fluke) protein is ATP-dependent zinc metalloprotease YME1 homolog.